The following is a 153-amino-acid chain: Guanyl-specific ribonuclease N1 (153 aa).

An N-terminal signal peptide occupies residues 1–20 (MVQLLSAFVSLLSVVAVSGA). Residues 21 to 49 (AIPAPAPEAVVDVAPETATIEPTGNFTAQ) constitute a propeptide that is removed on maturation. 2 cysteine pairs are disulfide-bonded: Cys51–Cys59 and Cys55–Cys152. The active site involves His89. The Proton acceptor role is filled by Glu107. The active-site Proton donor is the His141.

The protein belongs to the ribonuclease N1/T1 family.

The enzyme catalyses [RNA] containing guanosine + H2O = an [RNA fragment]-3'-guanosine-3'-phosphate + a 5'-hydroxy-ribonucleotide-3'-[RNA fragment].. The protein is Guanyl-specific ribonuclease N1 (grn) of Neurospora crassa (strain ATCC 24698 / 74-OR23-1A / CBS 708.71 / DSM 1257 / FGSC 987).